A 275-amino-acid polypeptide reads, in one-letter code: 2,3,4,5-tetrahydropyridine-2,6-dicarboxylate N-succinyltransferase (275 aa).

The protein belongs to the transferase hexapeptide repeat family.

It is found in the cytoplasm. It carries out the reaction (S)-2,3,4,5-tetrahydrodipicolinate + succinyl-CoA + H2O = (S)-2-succinylamino-6-oxoheptanedioate + CoA. It participates in amino-acid biosynthesis; L-lysine biosynthesis via DAP pathway; LL-2,6-diaminopimelate from (S)-tetrahydrodipicolinate (succinylase route): step 1/3. In Ralstonia pickettii (strain 12J), this protein is 2,3,4,5-tetrahydropyridine-2,6-dicarboxylate N-succinyltransferase.